The primary structure comprises 276 residues: Protein MGF 360-15R (276 aa).

Belongs to the asfivirus MGF 360 family.

Functionally, plays a role in virus cell tropism, and may be required for efficient virus replication in macrophages. The sequence is that of Protein MGF 360-15R from Ornithodoros (relapsing fever ticks).